The primary structure comprises 570 residues: Urease subunit alpha (570 aa).

Residues 131–570 (GGMDSHIHFI…LPMAQRYFLF (440 aa)) enclose the Urease domain. The Ni(2+) site is built by His136, His138, and Lys219. Lys219 is modified (N6-carboxylysine). His221 is a binding site for substrate. Ni(2+)-binding residues include His248 and His274. Catalysis depends on His322, which acts as the Proton donor. Asp362 provides a ligand contact to Ni(2+).

It belongs to the metallo-dependent hydrolases superfamily. Urease alpha subunit family. As to quaternary structure, heterotrimer of UreA (gamma), UreB (beta) and UreC (alpha) subunits. Three heterotrimers associate to form the active enzyme. Ni cation serves as cofactor. In terms of processing, carboxylation allows a single lysine to coordinate two nickel ions.

The protein resides in the cytoplasm. It catalyses the reaction urea + 2 H2O + H(+) = hydrogencarbonate + 2 NH4(+). The protein operates within nitrogen metabolism; urea degradation; CO(2) and NH(3) from urea (urease route): step 1/1. The protein is Urease subunit alpha of Rhizobium etli (strain ATCC 51251 / DSM 11541 / JCM 21823 / NBRC 15573 / CFN 42).